A 737-amino-acid polypeptide reads, in one-letter code: Photosystem I P700 chlorophyll a apoprotein A2 (737 aa).

A run of 8 helical transmembrane segments spans residues 46 to 69 (IFAS…FHVA), 135 to 158 (LYNG…LHLQ), 175 to 199 (LNHH…HVAI), 273 to 291 (IAHH…GHMY), 330 to 353 (LHFQ…QHMY), 369 to 395 (AALY…IFLV), 417 to 439 (AIIS…LYVH), and 520 to 538 (FLVH…LILV). Residues cysteine 562 and cysteine 571 each contribute to the [4Fe-4S] cluster site. The next 2 membrane-spanning stretches (helical) occupy residues 578–599 (AFYL…YWHW) and 646–668 (LSVW…MFLI). Positions 657, 665, and 673 each coordinate chlorophyll a. Residue tryptophan 674 coordinates phylloquinone. Residues 710–730 (LVGLAHFAVGYIVTYAAFLIA) traverse the membrane as a helical segment.

Belongs to the PsaA/PsaB family. As to quaternary structure, the PsaA/B heterodimer binds the P700 chlorophyll special pair and subsequent electron acceptors. PSI consists of a core antenna complex that captures photons, and an electron transfer chain that converts photonic excitation into a charge separation. The eukaryotic PSI reaction center is composed of at least 11 subunits. Requires P700 is a chlorophyll a/chlorophyll a' dimer, A0 is one or more chlorophyll a, A1 is one or both phylloquinones and FX is a shared 4Fe-4S iron-sulfur center. as cofactor.

Its subcellular location is the plastid. The protein resides in the cyanelle thylakoid membrane. It catalyses the reaction reduced [plastocyanin] + hnu + oxidized [2Fe-2S]-[ferredoxin] = oxidized [plastocyanin] + reduced [2Fe-2S]-[ferredoxin]. Its function is as follows. PsaA and PsaB bind P700, the primary electron donor of photosystem I (PSI), as well as the electron acceptors A0, A1 and FX. PSI is a cytochrome c6-ferredoxin oxidoreductase, converting photonic excitation into a charge separation, which transfers an electron from the donor P700 chlorophyll pair to the spectroscopically characterized acceptors A0, A1, FX, FA and FB in turn. Oxidized P700 is reduced on the lumenal side of the thylakoid membrane by cytochrome c6. This Cyanophora paradoxa protein is Photosystem I P700 chlorophyll a apoprotein A2.